We begin with the raw amino-acid sequence, 307 residues long: GTPase Era (307 aa).

Residues Arg7 to Val181 enclose the Era-type G domain. Positions Gly15–Ser22 are G1. Gly15 to Ser22 lines the GTP pocket. Positions Gln41–Asn45 are G2. Residues Asp62–Gly65 are G3. GTP is bound by residues Asp62–Ile66 and Asn130–Asp133. The segment at Asn130–Asp133 is G4. The interval Val160–Ala162 is G5. The 79-residue stretch at Leu212 to Glu290 folds into the KH type-2 domain.

It belongs to the TRAFAC class TrmE-Era-EngA-EngB-Septin-like GTPase superfamily. Era GTPase family. As to quaternary structure, monomer.

The protein resides in the cytoplasm. Its subcellular location is the cell inner membrane. Functionally, an essential GTPase that binds both GDP and GTP, with rapid nucleotide exchange. Plays a role in 16S rRNA processing and 30S ribosomal subunit biogenesis and possibly also in cell cycle regulation and energy metabolism. This chain is GTPase Era, found in Nitratidesulfovibrio vulgaris (strain DSM 19637 / Miyazaki F) (Desulfovibrio vulgaris).